The primary structure comprises 288 residues: MALFRKKDKYIRINPNRSRIESAPQAKPEVPDELFSKCPACKVILYKNDLGLEKTCQHCSYNFRITAQERRALTVDEGSFEELFTGIETTNPLDFPNYLEKLAATRQKTGLDEAVLTGKATIGGQPVALGIMDSHFIMASMGTVVGEKITRLFELAIEERLPVVLFTASGGARMQEGIMSLMQMAKISAAVKRHSNAGLFYLTVLTDPTTGGVTASFAMEGDIILAEPQTLVGFAGRRVIESTVRENLPDDFQKAEFLQEHGFVDAIVKRQDLPATISRLLRMHGGVR.

The CoA carboxyltransferase N-terminal domain occupies 34-288 (LFSKCPACKV…RLLRMHGGVR (255 aa)). Residues Cys38, Cys41, Cys56, and Cys59 each coordinate Zn(2+). The C4-type zinc finger occupies 38 to 59 (CPACKVILYKNDLGLEKTCQHC).

The protein belongs to the AccD/PCCB family. As to quaternary structure, acetyl-CoA carboxylase is a heterohexamer composed of biotin carboxyl carrier protein (AccB), biotin carboxylase (AccC) and two subunits each of ACCase subunit alpha (AccA) and ACCase subunit beta (AccD). It depends on Zn(2+) as a cofactor.

The protein localises to the cytoplasm. The enzyme catalyses N(6)-carboxybiotinyl-L-lysyl-[protein] + acetyl-CoA = N(6)-biotinyl-L-lysyl-[protein] + malonyl-CoA. It participates in lipid metabolism; malonyl-CoA biosynthesis; malonyl-CoA from acetyl-CoA: step 1/1. Its function is as follows. Component of the acetyl coenzyme A carboxylase (ACC) complex. Biotin carboxylase (BC) catalyzes the carboxylation of biotin on its carrier protein (BCCP) and then the CO(2) group is transferred by the transcarboxylase to acetyl-CoA to form malonyl-CoA. The protein is Acetyl-coenzyme A carboxylase carboxyl transferase subunit beta of Streptococcus suis (strain 98HAH33).